The following is a 104-amino-acid chain: Large ribosomal subunit protein uL24 (104 aa).

The protein belongs to the universal ribosomal protein uL24 family. Part of the 50S ribosomal subunit.

Functionally, one of two assembly initiator proteins, it binds directly to the 5'-end of the 23S rRNA, where it nucleates assembly of the 50S subunit. One of the proteins that surrounds the polypeptide exit tunnel on the outside of the subunit. The protein is Large ribosomal subunit protein uL24 of Aliivibrio fischeri (strain ATCC 700601 / ES114) (Vibrio fischeri).